Here is a 199-residue protein sequence, read N- to C-terminus: Holliday junction branch migration complex subunit RuvA (199 aa).

A domain I region spans residues 1-63 (MYEYLTGLVT…EDNISLFGFT (63 aa)). Residues 64–142 (DQNEKNLFMQ…NESSSSLFAT (79 aa)) are domain II. The tract at residues 143-149 (TQLTVDA) is flexible linker. The domain III stretch occupies residues 150–199 (TVNRELKDALEALAALGYKERDIKKVQKALMKEEQMATDEYLRQALRLLN).

It belongs to the RuvA family. Homotetramer. Forms an RuvA(8)-RuvB(12)-Holliday junction (HJ) complex. HJ DNA is sandwiched between 2 RuvA tetramers; dsDNA enters through RuvA and exits via RuvB. An RuvB hexamer assembles on each DNA strand where it exits the tetramer. Each RuvB hexamer is contacted by two RuvA subunits (via domain III) on 2 adjacent RuvB subunits; this complex drives branch migration. In the full resolvosome a probable DNA-RuvA(4)-RuvB(12)-RuvC(2) complex forms which resolves the HJ.

Its subcellular location is the cytoplasm. Its function is as follows. The RuvA-RuvB-RuvC complex processes Holliday junction (HJ) DNA during genetic recombination and DNA repair, while the RuvA-RuvB complex plays an important role in the rescue of blocked DNA replication forks via replication fork reversal (RFR). RuvA specifically binds to HJ cruciform DNA, conferring on it an open structure. The RuvB hexamer acts as an ATP-dependent pump, pulling dsDNA into and through the RuvAB complex. HJ branch migration allows RuvC to scan DNA until it finds its consensus sequence, where it cleaves and resolves the cruciform DNA. The sequence is that of Holliday junction branch migration complex subunit RuvA from Limosilactobacillus reuteri subsp. reuteri (strain JCM 1112) (Lactobacillus reuteri).